The chain runs to 1050 residues: Isoleucine--tRNA ligase (1050 aa).

Residues 45 to 56 carry the 'HIGH' region motif; sequence PYPSSPIPHIGT. The 'KMSKS' region signature appears at 594-598; sequence EMHKS. ATP is bound at residue K597.

Belongs to the class-I aminoacyl-tRNA synthetase family. IleS type 2 subfamily. Monomer. Zn(2+) serves as cofactor.

It localises to the cytoplasm. It catalyses the reaction tRNA(Ile) + L-isoleucine + ATP = L-isoleucyl-tRNA(Ile) + AMP + diphosphate. Catalyzes the attachment of isoleucine to tRNA(Ile). As IleRS can inadvertently accommodate and process structurally similar amino acids such as valine, to avoid such errors it has two additional distinct tRNA(Ile)-dependent editing activities. One activity is designated as 'pretransfer' editing and involves the hydrolysis of activated Val-AMP. The other activity is designated 'posttransfer' editing and involves deacylation of mischarged Val-tRNA(Ile). This Sulfolobus acidocaldarius (strain ATCC 33909 / DSM 639 / JCM 8929 / NBRC 15157 / NCIMB 11770) protein is Isoleucine--tRNA ligase.